The chain runs to 501 residues: Solute carrier family 2, facilitated glucose transporter member 5 (501 aa).

Met1 is modified (N-acetylmethionine). The Cytoplasmic portion of the chain corresponds to 1–18 (MEQQDQSMKEGRLTLVLA). A helical membrane pass occupies residues 19-39 (LATLIAAFGSSFQYGYNVAAV). D-fructose is bound at residue Tyr32. Residues 40 to 68 (NSPALLMQQFYNETYYGRTGEFMEDFPLT) are Extracellular-facing. N-linked (GlcNAc...) asparagine glycosylation is present at Asn51. The chain crosses the membrane as a helical span at residues 69 to 91 (LLWSVTVSMFPFGGFIGSLLVGP). At 92–98 (LVNKFGR) the chain is on the cytoplasmic side. The chain crosses the membrane as a helical span at residues 99–119 (KGALLFNNIFSIVPAILMGCS). Over 120–126 (RVAKSFE) the chain is Extracellular. A helical membrane pass occupies residues 127 to 149 (LIIISRLLVGICAGVSSNVVPMY). The Cytoplasmic portion of the chain corresponds to 150-161 (LGELAPKNLRGA). The chain crosses the membrane as a helical span at residues 162 to 182 (LGVVPQLFITVGILVAQIFGL). D-fructose is bound at residue Gln167. Residues 183-192 (RNLLANVDGW) are Extracellular-facing. A helical membrane pass occupies residues 193 to 213 (PILLGLTGVPAALQLVLLPFF). Residues 214 to 277 (PESPRYLLIQ…LFRMRSLRWQ (64 aa)) are Cytoplasmic-facing. A helical membrane pass occupies residues 278 to 298 (LLSIIVLMGGQQLSGVNAIYY). Residues Gln288 and 296–298 (IYY) contribute to the D-fructose site. Residues 299–313 (YADQIYLSAGVPKEH) lie on the Extracellular side of the membrane. The chain crosses the membrane as a helical span at residues 314–334 (VQFVTAGTGAVNVVMTFCAVF). Topologically, residues 335–342 (VVELLGRR) are cytoplasmic. Residues 343–363 (LLLLLGFSICLVACCVLTAAL) traverse the membrane as a helical segment. The Extracellular segment spans residues 364–371 (ALQDTVSW). Residues 372 to 394 (MPYISIVCVISYVIGHALGPSPI) traverse the membrane as a helical segment. His387 contacts D-fructose. Topologically, residues 395-412 (PALLITEIFLQSSRPSAF) are cytoplasmic. A helical transmembrane segment spans residues 413–433 (MVGGSVHWLSNFTVGLIFPFI). Position 419 to 420 (419 to 420 (HW)) interacts with D-fructose. Topologically, residues 434-439 (QEGLGP) are extracellular. Residues 440 to 460 (YSFIVFAVICLLTTIYIFLIV) traverse the membrane as a helical segment. Residues 461–501 (PETKAKTFIEINQIFTKMNKVSEVYPEKEELKELPPVTLEQ) are Cytoplasmic-facing.

This sequence belongs to the major facilitator superfamily. Sugar transporter (TC 2.A.1.1) family. Glucose transporter subfamily.

It localises to the apical cell membrane. The protein resides in the cell membrane. Its subcellular location is the sarcolemma. It catalyses the reaction D-fructose(out) = D-fructose(in). Functionally, functions as a fructose transporter that has only low activity with other monosaccharides. Can mediate the uptake of deoxyglucose, but with low efficiency. Essential for fructose uptake in the small intestine. Plays a role in the regulation of salt uptake and blood pressure in response to dietary fructose. Required for the development of high blood pressure in response to high dietary fructose intake. The polypeptide is Solute carrier family 2, facilitated glucose transporter member 5 (Pongo abelii (Sumatran orangutan)).